Consider the following 476-residue polypeptide: Bifunctional protein HldE (476 aa).

The tract at residues 1-318 is ribokinase; sequence MKPVLPDYSK…AEAVHGSKDT (318 aa). 195 to 198 lines the ATP pocket; the sequence is NMSE. Asp264 is a catalytic residue. The tract at residues 344-476 is cytidylyltransferase; sequence MTNGCFDILH…IIEAIKGGRG (133 aa).

This sequence in the N-terminal section; belongs to the carbohydrate kinase PfkB family. It in the C-terminal section; belongs to the cytidylyltransferase family. Homodimer.

The catalysed reaction is D-glycero-beta-D-manno-heptose 7-phosphate + ATP = D-glycero-beta-D-manno-heptose 1,7-bisphosphate + ADP + H(+). It carries out the reaction D-glycero-beta-D-manno-heptose 1-phosphate + ATP + H(+) = ADP-D-glycero-beta-D-manno-heptose + diphosphate. It functions in the pathway nucleotide-sugar biosynthesis; ADP-L-glycero-beta-D-manno-heptose biosynthesis; ADP-L-glycero-beta-D-manno-heptose from D-glycero-beta-D-manno-heptose 7-phosphate: step 1/4. It participates in nucleotide-sugar biosynthesis; ADP-L-glycero-beta-D-manno-heptose biosynthesis; ADP-L-glycero-beta-D-manno-heptose from D-glycero-beta-D-manno-heptose 7-phosphate: step 3/4. In terms of biological role, catalyzes the phosphorylation of D-glycero-D-manno-heptose 7-phosphate at the C-1 position to selectively form D-glycero-beta-D-manno-heptose-1,7-bisphosphate. Functionally, catalyzes the ADP transfer from ATP to D-glycero-beta-D-manno-heptose 1-phosphate, yielding ADP-D-glycero-beta-D-manno-heptose. The protein is Bifunctional protein HldE of Vibrio cholerae serotype O1 (strain M66-2).